A 316-amino-acid chain; its full sequence is 4-hydroxy-3-methylbut-2-enyl diphosphate reductase (316 aa).

Cys12 contacts [4Fe-4S] cluster. His41 and His74 together coordinate (2E)-4-hydroxy-3-methylbut-2-enyl diphosphate. Positions 41 and 74 each coordinate dimethylallyl diphosphate. His41 and His74 together coordinate isopentenyl diphosphate. Residue Cys96 participates in [4Fe-4S] cluster binding. His124 lines the (2E)-4-hydroxy-3-methylbut-2-enyl diphosphate pocket. His124 provides a ligand contact to dimethylallyl diphosphate. His124 contacts isopentenyl diphosphate. The active-site Proton donor is Glu126. Thr167 lines the (2E)-4-hydroxy-3-methylbut-2-enyl diphosphate pocket. Cys197 contacts [4Fe-4S] cluster. (2E)-4-hydroxy-3-methylbut-2-enyl diphosphate-binding residues include Ser225, Ser226, Asn227, and Ser269. The dimethylallyl diphosphate site is built by Ser225, Ser226, Asn227, and Ser269. Isopentenyl diphosphate is bound by residues Ser225, Ser226, Asn227, and Ser269.

It belongs to the IspH family. Homodimer. Requires [4Fe-4S] cluster as cofactor.

It carries out the reaction isopentenyl diphosphate + 2 oxidized [2Fe-2S]-[ferredoxin] + H2O = (2E)-4-hydroxy-3-methylbut-2-enyl diphosphate + 2 reduced [2Fe-2S]-[ferredoxin] + 2 H(+). The enzyme catalyses dimethylallyl diphosphate + 2 oxidized [2Fe-2S]-[ferredoxin] + H2O = (2E)-4-hydroxy-3-methylbut-2-enyl diphosphate + 2 reduced [2Fe-2S]-[ferredoxin] + 2 H(+). Its pathway is isoprenoid biosynthesis; dimethylallyl diphosphate biosynthesis; dimethylallyl diphosphate from (2E)-4-hydroxy-3-methylbutenyl diphosphate: step 1/1. It functions in the pathway isoprenoid biosynthesis; isopentenyl diphosphate biosynthesis via DXP pathway; isopentenyl diphosphate from 1-deoxy-D-xylulose 5-phosphate: step 6/6. In terms of biological role, catalyzes the conversion of 1-hydroxy-2-methyl-2-(E)-butenyl 4-diphosphate (HMBPP) into a mixture of isopentenyl diphosphate (IPP) and dimethylallyl diphosphate (DMAPP). Acts in the terminal step of the DOXP/MEP pathway for isoprenoid precursor biosynthesis. This is 4-hydroxy-3-methylbut-2-enyl diphosphate reductase from Pectobacterium atrosepticum (strain SCRI 1043 / ATCC BAA-672) (Erwinia carotovora subsp. atroseptica).